The chain runs to 445 residues: Chromosomal replication initiator protein DnaA (445 aa).

The tract at residues 1–72 (MSGIDTIWEK…QEAFIEEIGE (72 aa)) is domain I, interacts with DnaA modulators. A domain II region spans residues 72–107 (EKLNIKVISSEDELMNNEKEAPVRKTQQTSQELLPN). The interval 108-324 (QLNTDNTFDT…GALTRVSAYS (217 aa)) is domain III, AAA+ region. Glycine 152, glycine 154, lysine 155, and threonine 156 together coordinate ATP. A domain IV, binds dsDNA region spans residues 325-445 (KLVNRELNSD…LKNIEKDITS (121 aa)).

It belongs to the DnaA family. As to quaternary structure, oligomerizes as a right-handed, spiral filament on DNA at oriC.

It localises to the cytoplasm. Plays an essential role in the initiation and regulation of chromosomal replication. ATP-DnaA binds to the origin of replication (oriC) to initiate formation of the DNA replication initiation complex once per cell cycle. Binds the DnaA box (a 9 base pair repeat at the origin) and separates the double-stranded (ds)DNA. Forms a right-handed helical filament on oriC DNA; dsDNA binds to the exterior of the filament while single-stranded (ss)DNA is stabiized in the filament's interior. The ATP-DnaA-oriC complex binds and stabilizes one strand of the AT-rich DNA unwinding element (DUE), permitting loading of DNA polymerase. After initiation quickly degrades to an ADP-DnaA complex that is not apt for DNA replication. Binds acidic phospholipids. This chain is Chromosomal replication initiator protein DnaA, found in Macrococcus caseolyticus (strain JCSC5402) (Macrococcoides caseolyticum).